The sequence spans 551 residues: Probable aldehyde dehydrogenase (551 aa).

Residue 278–283 (GSSRVA) participates in NAD(+) binding. E297 (proton acceptor) is an active-site residue. C332 acts as the Nucleophile in catalysis.

The protein belongs to the aldehyde dehydrogenase family. As to expression, in uninfected plants, highest levels found in stems. In plants infected with the flax rust, highest levels in leaves. Higher levels of expression in infected leaves than uninfected stems.

The catalysed reaction is an aldehyde + NAD(+) + H2O = a carboxylate + NADH + 2 H(+). Its function is as follows. Could be involved in facilitating the biotrophic relationship between the plant and the rust fungus. The polypeptide is Probable aldehyde dehydrogenase (FIS1) (Linum usitatissimum (Flax)).